A 490-amino-acid polypeptide reads, in one-letter code: MVSSITRIPGIPGDSPSEAEGLGKGIESSFGLNLIPLPANPLFGTDGIRGRVGELLSAPLALQVGFWTGIVLRNHATQIGPVILGQDSRNSSDMLAMALSAGLTAAGLEVWYLGLCPTPCIAYLTSISDAIGGVMISASHNPPEDNGIKVFGANGGKLPQILQAEIEAGLRGKISPIAKVSNCGRHYSRFELVGHYGDALKKPLNSTLNLQGMKIVLDLAWGAAVGLAPSVFTEMGAEVICLHNEADGDRINVNCGSTHLDILAATVQEHNADIGFAFDGDADRVLAVDNTGRQVNGDYILYLWGRHLQKNQQLPDNLIVSTVMANLGFEKAWQQIGGKLIRTAVGDQYVQAEMQRTGGMLGGEQSGHILCRHYAVTGDGLLTALHMAALVKEAGVSLAELVDQSFQTYPQILRNVRVTDRDRRLGWQDCEPVQQAIALAEAAMGDSGRILVRASGTEPVIRVMVEAANAELTNYWTNELVSKVQQHLMD.

Residue Ser-139 is the Phosphoserine intermediate of the active site. Positions 139, 279, 281, and 283 each coordinate Mg(2+). Position 139 is a phosphoserine (Ser-139).

It belongs to the phosphohexose mutase family. Mg(2+) serves as cofactor. In terms of processing, activated by phosphorylation.

The catalysed reaction is alpha-D-glucosamine 1-phosphate = D-glucosamine 6-phosphate. Its function is as follows. Catalyzes the conversion of glucosamine-6-phosphate to glucosamine-1-phosphate. In Nostoc punctiforme (strain ATCC 29133 / PCC 73102), this protein is Phosphoglucosamine mutase.